A 274-amino-acid chain; its full sequence is MPIVKSKPTSAGRRFVVSVVSPDLHKGEPYAPLVEKKVRSGGRNNQGRITTRHVGGGHKQRYRIIDFKRDKDGIPGRVERLEYDPNRSAHIALVLYADGERRYVIAPKGVQAGDQLLSGTNAPIRAGNTLPLRNIPVGTVVHCIEMKPGKGAQMARSAGAAVQLVAREGQHATLRLRSGEMRKVPADCRATIGEVSNSEHSLRKFGKAGAKRWLGIRPTVRGTAMNPVDHPHGGGEGRNFGKHPVTPWGVPTKGYKTRKNKRTDNMIVRRRNKK.

The segment at 221–256 (RGTAMNPVDHPHGGGEGRNFGKHPVTPWGVPTKGYK) is disordered.

It belongs to the universal ribosomal protein uL2 family. In terms of assembly, part of the 50S ribosomal subunit. Forms a bridge to the 30S subunit in the 70S ribosome.

Functionally, one of the primary rRNA binding proteins. Required for association of the 30S and 50S subunits to form the 70S ribosome, for tRNA binding and peptide bond formation. It has been suggested to have peptidyltransferase activity; this is somewhat controversial. Makes several contacts with the 16S rRNA in the 70S ribosome. This is Large ribosomal subunit protein uL2 from Thioalkalivibrio sulfidiphilus (strain HL-EbGR7).